A 279-amino-acid polypeptide reads, in one-letter code: Phycobilisome rod-core linker polypeptide CpcG1 (279 aa).

Residues 11-189 form the PBS-linker domain; it reads SSQNQRVEGY…YWRDRQTLNA (179 aa).

This sequence belongs to the phycobilisome linker protein family. In terms of assembly, part of the phycobilisome, a hemidiscoidal structure that is composed of two distinct substructures: a core complex and a number of rods radiating from the core.

The protein localises to the cellular thylakoid membrane. In terms of biological role, rod-core linker protein required for attachment of phycocyanin to allophycocyanin in cores of phycobilisomes. Functionally, linker polypeptides determine the state of aggregation and the location of the disk-shaped phycobiliprotein units within the phycobilisome and modulate their spectroscopic properties in order to mediate a directed and optimal energy transfer. The protein is Phycobilisome rod-core linker polypeptide CpcG1 of Nostoc sp. (strain PCC 7120 / SAG 25.82 / UTEX 2576).